The sequence spans 427 residues: UPF0761 membrane protein Cphamn1_1013 (427 aa).

6 consecutive transmembrane segments (helical) span residues 51-71 (LLSLIPLMAVVLSVLSVSPVF), 107-127 (TVPTVGGIFLLIIALFLISTI), 147-167 (FTLYWTVLTLGPIIIGSGLVA), 188-208 (ILSYLPLVNSFLAFFLLYMLV), 218-238 (AVSGAFLATWLFELSKQWFSF), and 251-271 (GALSVIPLLFFWIYLIWVVAL).

This sequence belongs to the UPF0761 family.

It localises to the cell inner membrane. In Chlorobium phaeobacteroides (strain BS1), this protein is UPF0761 membrane protein Cphamn1_1013.